Reading from the N-terminus, the 162-residue chain is Shikimate kinase (162 aa).

Residue 11–16 coordinates ATP; that stretch reads GSGKSS. A Mg(2+)-binding site is contributed by S15. Substrate is bound by residues D33, R57, and G80. R116 contributes to the ATP binding site. Position 132 (R132) interacts with substrate.

Belongs to the shikimate kinase family. As to quaternary structure, monomer. Requires Mg(2+) as cofactor.

Its subcellular location is the cytoplasm. It carries out the reaction shikimate + ATP = 3-phosphoshikimate + ADP + H(+). The protein operates within metabolic intermediate biosynthesis; chorismate biosynthesis; chorismate from D-erythrose 4-phosphate and phosphoenolpyruvate: step 5/7. Functionally, catalyzes the specific phosphorylation of the 3-hydroxyl group of shikimic acid using ATP as a cosubstrate. The polypeptide is Shikimate kinase (Helicobacter pylori (strain Shi470)).